The sequence spans 48 residues: Large ribosomal subunit protein eL40 (48 aa).

It belongs to the eukaryotic ribosomal protein eL40 family.

This Methanoculleus marisnigri (strain ATCC 35101 / DSM 1498 / JR1) protein is Large ribosomal subunit protein eL40.